The primary structure comprises 419 residues: D-amino acid dehydrogenase (419 aa).

3–17 (VIVLGSGVIGVASAY) is an FAD binding site.

The protein belongs to the DadA oxidoreductase family. FAD is required as a cofactor.

The enzyme catalyses a D-alpha-amino acid + A + H2O = a 2-oxocarboxylate + AH2 + NH4(+). It functions in the pathway amino-acid degradation; D-alanine degradation; NH(3) and pyruvate from D-alanine: step 1/1. In terms of biological role, oxidative deamination of D-amino acids. The polypeptide is D-amino acid dehydrogenase (Acinetobacter baylyi (strain ATCC 33305 / BD413 / ADP1)).